A 476-amino-acid chain; its full sequence is Cytochrome P450 monooxygenase ppzE (476 aa).

A heme-binding site is contributed by C452.

Belongs to the cytochrome P450 family. It depends on heme as a cofactor.

It participates in secondary metabolite biosynthesis. Functionally, cytochrome P450 monooxygenase; part of the gene cluster that mediates the biosynthesis of pyrrolopyrazines, secondary metabolites showing insecticidal activity. The role of ppzE within the pathway has still to be determined. The single multifunctional NRPS ppzA is sufficient to produce peramine via condensation of 1-pyrroline-5-carboxylate and arginine, N-methylation of the alpha-amino group of arginine and reduction of the thioester and the cyclization to form an iminium ion resulting in release from the peptide synthetase. Deprotonation of this intermediate and oxidation of the pyrroline ring would give rise to peramine. In Epichloe species that produce only peramine, the peramine synthetase gene is not localized in a gene cluster, in contrast to Metarhizium species that contain additional pyrrolopyrazine biosynthesis genes. The 2-oxoglutarate-Fe(II) type oxidoreductase ppzC hydroxylates peramine to yield the newly identified compound 8-hydroxyperamine whereas ppzD converts L-proline into trans-4-hydroxy-L-proline, a precursor of peramine biosynthesis. The polypeptide is Cytochrome P450 monooxygenase ppzE (Metarhizium majus (strain ARSEF 297)).